Consider the following 181-residue polypeptide: Endoglucanase (181 aa).

Cysteines 4 and 16 form a disulfide. Catalysis depends on aspartate 24, which acts as the Nucleophile. Cystine bridges form between cysteine 30/cysteine 69, cysteine 32/cysteine 176, cysteine 65/cysteine 178, cysteine 72/cysteine 157, and cysteine 103/cysteine 113. Aspartate 132 (proton donor) is an active-site residue.

Digestive gland.

It catalyses the reaction Endohydrolysis of (1-&gt;4)-beta-D-glucosidic linkages in cellulose, lichenin and cereal beta-D-glucans.. Active towards the soluble carboxymethylcellulose (CMC). Possesses expansin activity too. This chain is Endoglucanase, found in Mytilus edulis (Blue mussel).